A 95-amino-acid polypeptide reads, in one-letter code: Aspartyl/glutamyl-tRNA(Asn/Gln) amidotransferase subunit C (95 aa).

This sequence belongs to the GatC family. In terms of assembly, heterotrimer of A, B and C subunits.

It carries out the reaction L-glutamyl-tRNA(Gln) + L-glutamine + ATP + H2O = L-glutaminyl-tRNA(Gln) + L-glutamate + ADP + phosphate + H(+). It catalyses the reaction L-aspartyl-tRNA(Asn) + L-glutamine + ATP + H2O = L-asparaginyl-tRNA(Asn) + L-glutamate + ADP + phosphate + 2 H(+). Functionally, allows the formation of correctly charged Asn-tRNA(Asn) or Gln-tRNA(Gln) through the transamidation of misacylated Asp-tRNA(Asn) or Glu-tRNA(Gln) in organisms which lack either or both of asparaginyl-tRNA or glutaminyl-tRNA synthetases. The reaction takes place in the presence of glutamine and ATP through an activated phospho-Asp-tRNA(Asn) or phospho-Glu-tRNA(Gln). The protein is Aspartyl/glutamyl-tRNA(Asn/Gln) amidotransferase subunit C of Cereibacter sphaeroides (strain ATCC 17025 / ATH 2.4.3) (Rhodobacter sphaeroides).